The following is a 303-amino-acid chain: 4-diphosphocytidyl-2-C-methyl-D-erythritol kinase (303 aa).

Residue lysine 21 is part of the active site. 106–116 (PVAAGIGGGSA) is an ATP binding site. The active site involves aspartate 148.

The protein belongs to the GHMP kinase family. IspE subfamily.

The catalysed reaction is 4-CDP-2-C-methyl-D-erythritol + ATP = 4-CDP-2-C-methyl-D-erythritol 2-phosphate + ADP + H(+). It functions in the pathway isoprenoid biosynthesis; isopentenyl diphosphate biosynthesis via DXP pathway; isopentenyl diphosphate from 1-deoxy-D-xylulose 5-phosphate: step 3/6. Functionally, catalyzes the phosphorylation of the position 2 hydroxy group of 4-diphosphocytidyl-2C-methyl-D-erythritol. This is 4-diphosphocytidyl-2-C-methyl-D-erythritol kinase from Nitrobacter hamburgensis (strain DSM 10229 / NCIMB 13809 / X14).